The sequence spans 87 residues: Phosphoribosyl-ATP pyrophosphatase (87 aa).

This sequence belongs to the PRA-PH family.

The protein localises to the cytoplasm. It carries out the reaction 1-(5-phospho-beta-D-ribosyl)-ATP + H2O = 1-(5-phospho-beta-D-ribosyl)-5'-AMP + diphosphate + H(+). Its pathway is amino-acid biosynthesis; L-histidine biosynthesis; L-histidine from 5-phospho-alpha-D-ribose 1-diphosphate: step 2/9. The polypeptide is Phosphoribosyl-ATP pyrophosphatase (Pseudarthrobacter chlorophenolicus (strain ATCC 700700 / DSM 12829 / CIP 107037 / JCM 12360 / KCTC 9906 / NCIMB 13794 / A6) (Arthrobacter chlorophenolicus)).